Here is a 271-residue protein sequence, read N- to C-terminus: Ferric vulnibactin reductase VuuB (271 aa).

The region spanning 8–131 (VYPMLLDFVR…IGPAGPDPLI (124 aa)) is the FAD-binding FR-type domain.

Belongs to the SIP oxidoreductase family. Monomer. FAD is required as a cofactor.

It localises to the cytoplasm. The catalysed reaction is 2 a Fe(II)-siderophore + NAD(+) + H(+) = 2 a Fe(III)-siderophore + NADH. In terms of biological role, ferric-siderophore reductase involved in iron removal from the siderophores after their transport into the cell. Acts as a major ferric-vulnibactin reductase catalyzing the reduction of Fe(3+)-vulnibactin, a catecholate siderophore synthesized by V.vulnificus. This chain is Ferric vulnibactin reductase VuuB, found in Vibrio vulnificus (strain CMCP6).